Here is an 814-residue protein sequence, read N- to C-terminus: Rap guanine nucleotide exchange factor 5 (814 aa).

Positions 43–118 (LQAADLVKDR…DNYVFYQFSS (76 aa)) constitute a DEP domain. The N-terminal Ras-GEF domain maps to 301 to 434 (ARYVVVSGTP…ELKEFQKILG (134 aa)). The Ras-GEF domain occupies 578–813 (NTWDLALELM…FELSHRLEPR (236 aa)).

It is found in the nucleus. Guanine nucleotide exchange factor (GEF) for RAP1A, RAP2A and MRAS/M-Ras-GTP. Its association with MRAS inhibits Rap1 activation. In Mus musculus (Mouse), this protein is Rap guanine nucleotide exchange factor 5 (Rapgef5).